We begin with the raw amino-acid sequence, 613 residues long: TANK-binding kinase 1-binding protein 1 (613 aa).

The interval 1–280 is homodimerization; it reads MESMFEDDIS…QDLASNQSEC (280 aa). A coiled-coil region spans residues 48 to 162; the sequence is YGDIKERLGG…ALVETHLRQI (115 aa). Phosphoserine is present on serine 184. Positions 218–277 form a coiled coil; that stretch reads TSVSVSELERRRLEEALEAAQGEARGAQLREEQLQAECERLQGELKQLQETRAQDLASNQ. The interval 281-330 is interaction with TBK1 and IKBKE; that stretch reads GMAWVKRVGDDQVNLALAYTELTEELGRLRELSSLQGRILRTLLQEQARN. Residues 328 to 457 form a disordered region; sequence ARNAGQRHSP…HHAKAGFQGR (130 aa). The span at 346 to 361 shows a compositional bias: pro residues; the sequence is PACPSPSPPARPPPCA. Over residues 362–372 the composition is skewed to low complexity; that stretch reads PCQSPAAQRRS. Serine 365, serine 372, serine 379, serine 385, serine 400, and serine 415 each carry phosphoserine. The span at 389–406 shows a compositional bias: pro residues; that stretch reads PSCPSPVPQRRSPVPPSC. Pro residues predominate over residues 416 to 433; sequence PVPPSCPAPQPRPPPPPG. Residues serine 502 and serine 532 each carry the phosphoserine modification. The UBZ1-type zinc finger occupies 581-607; sequence IRSCPLCQLGFPVGYPDDALIKHIDSH. Zn(2+)-binding residues include cysteine 584, cysteine 587, histidine 603, and histidine 607.

Homodimer. May form a heterodimer with NAP1. Interacts with TKB1 and IKBKE. Weakly interacts with DDX3X.

Adapter protein which constitutively binds TBK1 and IKBKE playing a role in antiviral innate immunity. Essential for the efficient induction of IRF-dependent transcription following infection with Sendai virus. This chain is TANK-binding kinase 1-binding protein 1, found in Rattus norvegicus (Rat).